Consider the following 258-residue polypeptide: Proteasome subunit alpha (258 aa).

The protein belongs to the peptidase T1A family. In terms of assembly, the 20S proteasome core is composed of 14 alpha and 14 beta subunits that assemble into four stacked heptameric rings, resulting in a barrel-shaped structure. The two inner rings, each composed of seven catalytic beta subunits, are sandwiched by two outer rings, each composed of seven alpha subunits. The catalytic chamber with the active sites is on the inside of the barrel. Has a gated structure, the ends of the cylinder being occluded by the N-termini of the alpha-subunits. Is capped at one or both ends by the proteasome regulatory ATPase, PAN.

The protein resides in the cytoplasm. With respect to regulation, the formation of the proteasomal ATPase PAN-20S proteasome complex, via the docking of the C-termini of PAN into the intersubunit pockets in the alpha-rings, triggers opening of the gate for substrate entry. Interconversion between the open-gate and close-gate conformations leads to a dynamic regulation of the 20S proteasome proteolysis activity. Its function is as follows. Component of the proteasome core, a large protease complex with broad specificity involved in protein degradation. The sequence is that of Proteasome subunit alpha from Aeropyrum pernix (strain ATCC 700893 / DSM 11879 / JCM 9820 / NBRC 100138 / K1).